A 490-amino-acid chain; its full sequence is Probable cytosol aminopeptidase (490 aa).

Mn(2+) is bound by residues Lys255 and Asp260. Lys267 is a catalytic residue. Mn(2+)-binding residues include Asp278, Asp337, and Glu339. Arg341 is a catalytic residue.

This sequence belongs to the peptidase M17 family. The cofactor is Mn(2+).

It localises to the cytoplasm. The catalysed reaction is Release of an N-terminal amino acid, Xaa-|-Yaa-, in which Xaa is preferably Leu, but may be other amino acids including Pro although not Arg or Lys, and Yaa may be Pro. Amino acid amides and methyl esters are also readily hydrolyzed, but rates on arylamides are exceedingly low.. It carries out the reaction Release of an N-terminal amino acid, preferentially leucine, but not glutamic or aspartic acids.. In terms of biological role, presumably involved in the processing and regular turnover of intracellular proteins. Catalyzes the removal of unsubstituted N-terminal amino acids from various peptides. In Gluconobacter oxydans (strain 621H) (Gluconobacter suboxydans), this protein is Probable cytosol aminopeptidase.